We begin with the raw amino-acid sequence, 115 residues long: Translation initiation factor 1A 2 (115 aa).

The tract at residues 1-34 is disordered; it reads MANYRSTIRHRNSGSRKSVSGDTHEVTRVRTPQK. Positions 22 to 34 are enriched in basic and acidic residues; it reads DTHEVTRVRTPQK. The S1-like domain occupies 27–101; the sequence is TRVRTPQKDR…SKADVTWKYT (75 aa).

Belongs to the eIF-1A family.

Seems to be required for maximal rate of protein biosynthesis. Enhances ribosome dissociation into subunits and stabilizes the binding of the initiator Met-tRNA(I) to 40 S ribosomal subunits. In Methanosarcina barkeri (strain Fusaro / DSM 804), this protein is Translation initiation factor 1A 2.